The primary structure comprises 384 residues: Acetylgalactosaminyl-O-glycosyl-glycoprotein beta-1,3-N-acetylglucosaminyltransferase (384 aa).

The Cytoplasmic segment spans residues 1–12 (MAFPCRRSLTAK). Residues 13-31 (TLACLLVGVSFLALQQWFL) form a helical; Signal-anchor for type II membrane protein membrane-spanning segment. Over 32 to 384 (QAPRSPREER…LSCDRGHRVS (353 aa)) the chain is Lumenal. A disordered region spans residues 34–68 (PRSPREERSPQEETPEGPTDAPAADEPPSELVPGP). 3 N-linked (GlcNAc...) asparagine glycosylation sites follow: N73, N77, and N196.

Belongs to the glycosyltransferase 31 family. In terms of tissue distribution, present in stomach and colon (at protein level). Restricted in the stomach, colon and small intestine, where core 3 structure is present.

Its subcellular location is the golgi apparatus membrane. The enzyme catalyses a 3-O-[N-acetyl-alpha-D-galactosaminyl]-L-threonyl-[protein] + UDP-N-acetyl-alpha-D-glucosamine = a 3-O-[N-acetyl-beta-D-glucosaminyl-(1-&gt;3)-N-acetyl-alpha-D-galactosaminyl]-L-threonyl-[protein] + UDP + H(+). It carries out the reaction a 3-O-[N-acetyl-alpha-D-galactosaminyl]-L-seryl-[protein] + UDP-N-acetyl-alpha-D-glucosamine = 3-O-[N-acetyl-beta-D-glucosaminyl-(1-&gt;3)-N-acetyl-alpha-D-galactosaminyl]-L-seryl-[protein] + UDP + H(+). It functions in the pathway protein modification; protein glycosylation. Beta-1,3-N-acetylglucosaminyltransferase that synthesizes the core 3 structure of the O-glycan, an important precursor in the biosynthesis of mucin-type glycoproteins. Plays an important role in the synthesis of mucin-type O-glycans in digestive organs. This is Acetylgalactosaminyl-O-glycosyl-glycoprotein beta-1,3-N-acetylglucosaminyltransferase (B3GNT6) from Homo sapiens (Human).